Consider the following 101-residue polypeptide: Chaperone modulatory protein CbpM (101 aa).

It belongs to the CbpM family.

Its function is as follows. Interacts with CbpA and inhibits both the DnaJ-like co-chaperone activity and the DNA binding activity of CbpA. Together with CbpA, modulates the activity of the DnaK chaperone system. Does not inhibit the co-chaperone activity of DnaJ. This is Chaperone modulatory protein CbpM from Citrobacter koseri (strain ATCC BAA-895 / CDC 4225-83 / SGSC4696).